The following is a 279-amino-acid chain: Octanoyl-[GcvH]:protein N-octanoyltransferase (279 aa).

Positions Glu48–Val253 constitute a BPL/LPL catalytic domain. The Acyl-thioester intermediate role is filled by Cys152.

This sequence belongs to the octanoyltransferase LipL family.

The catalysed reaction is N(6)-octanoyl-L-lysyl-[glycine-cleavage complex H protein] + L-lysyl-[lipoyl-carrier protein] = N(6)-octanoyl-L-lysyl-[lipoyl-carrier protein] + L-lysyl-[glycine-cleavage complex H protein]. The protein operates within protein modification; protein lipoylation via endogenous pathway; protein N(6)-(lipoyl)lysine from octanoyl-[acyl-carrier-protein]. Functionally, catalyzes the amidotransfer (transamidation) of the octanoyl moiety from octanoyl-GcvH to the lipoyl domain of the E2 subunit of lipoate-dependent enzymes. In Oceanobacillus iheyensis (strain DSM 14371 / CIP 107618 / JCM 11309 / KCTC 3954 / HTE831), this protein is Octanoyl-[GcvH]:protein N-octanoyltransferase.